Reading from the N-terminus, the 451-residue chain is UDP-N-acetylmuramoylalanine--D-glutamate ligase (451 aa).

119–125 (GSNGKTT) lines the ATP pocket.

The protein belongs to the MurCDEF family.

It is found in the cytoplasm. It catalyses the reaction UDP-N-acetyl-alpha-D-muramoyl-L-alanine + D-glutamate + ATP = UDP-N-acetyl-alpha-D-muramoyl-L-alanyl-D-glutamate + ADP + phosphate + H(+). The protein operates within cell wall biogenesis; peptidoglycan biosynthesis. In terms of biological role, cell wall formation. Catalyzes the addition of glutamate to the nucleotide precursor UDP-N-acetylmuramoyl-L-alanine (UMA). This Bacillus cytotoxicus (strain DSM 22905 / CIP 110041 / 391-98 / NVH 391-98) protein is UDP-N-acetylmuramoylalanine--D-glutamate ligase.